We begin with the raw amino-acid sequence, 145 residues long: Ribosome maturation factor RimP (145 aa).

This sequence belongs to the RimP family.

It is found in the cytoplasm. In terms of biological role, required for maturation of 30S ribosomal subunits. In Borreliella burgdorferi (strain ZS7) (Borrelia burgdorferi), this protein is Ribosome maturation factor RimP.